Reading from the N-terminus, the 217-residue chain is Mucosal pentraxin (217 aa).

The first 19 residues, 1-19 (MEKLLLGVLLLAFLPEGMT), serve as a signal peptide directing secretion. Positions 24–217 (RGKVFIFPEQ…KGYVVVKPKL (194 aa)) constitute a Pentraxin (PTX) domain. Residues cysteine 55 and cysteine 114 are joined by a disulfide bond. 6 residues coordinate Ca(2+): aspartate 77, asparagine 78, glutamate 155, glutamine 156, aspartate 157, and glutamine 167.

It belongs to the pentraxin family. As to quaternary structure, homopentamer. Pentraxin (or pentaxin) have a discoid arrangement of 5 non-covalently bound subunits. It depends on Ca(2+) as a cofactor.

The protein resides in the secreted. The chain is Mucosal pentraxin (MPTX) from Bos taurus (Bovine).